We begin with the raw amino-acid sequence, 348 residues long: Mitochondrial glycine transporter (348 aa).

3 Solcar repeats span residues 10-94 (TKST…IREN), 130-214 (LSNT…SKQH), and 249-333 (RAAS…LIRR). The next 6 membrane-spanning stretches (helical) occupy residues 16–41 (FVAGLGSGVLSAILLQPIDLLKTRVQ), 69–95 (GTLPSALRTGFGSAIYFTTLNTIRENA), 136–161 (LLAGAVARSFAGFILMPLTVLKVRYE), 189–212 (GFGATAIRDAPYAGLYVLFYEKSK), 253–279 (INFASGVFSAIICSIISNPFDAVKTRI), and 308–326 (GLALRMSRKAMSSALAWTV).

This sequence belongs to the mitochondrial carrier (TC 2.A.29) family. SLC25A38 subfamily.

The protein resides in the mitochondrion inner membrane. The catalysed reaction is glycine(in) = glycine(out). Mitochondrial glycine transporter that imports glycine into the mitochondrial matrix. Plays an important role in providing glycine for the first enzymatic step in heme biosynthesis, the condensation of glycine with succinyl-CoA to produce 5-aminolevulinate (ALA) in the mitochondrial matrix. In Neurospora crassa (strain ATCC 24698 / 74-OR23-1A / CBS 708.71 / DSM 1257 / FGSC 987), this protein is Mitochondrial glycine transporter (mic-13).